The primary structure comprises 476 residues: tRNA(Ile)-lysidine synthase (476 aa).

Position 25-30 (25-30) interacts with ATP; sequence SGGPDS.

The protein belongs to the tRNA(Ile)-lysidine synthase family.

Its subcellular location is the cytoplasm. The catalysed reaction is cytidine(34) in tRNA(Ile2) + L-lysine + ATP = lysidine(34) in tRNA(Ile2) + AMP + diphosphate + H(+). Ligates lysine onto the cytidine present at position 34 of the AUA codon-specific tRNA(Ile) that contains the anticodon CAU, in an ATP-dependent manner. Cytidine is converted to lysidine, thus changing the amino acid specificity of the tRNA from methionine to isoleucine. This Bacillus licheniformis (strain ATCC 14580 / DSM 13 / JCM 2505 / CCUG 7422 / NBRC 12200 / NCIMB 9375 / NCTC 10341 / NRRL NRS-1264 / Gibson 46) protein is tRNA(Ile)-lysidine synthase.